We begin with the raw amino-acid sequence, 859 residues long: Glucans biosynthesis glucosyltransferase H (859 aa).

The next 6 helical transmembrane spans lie at 144 to 166, 200 to 222, 523 to 545, 573 to 595, 608 to 630, and 684 to 706; these read YILLILMLGQTIVAGSYMKGILP, LLLFGILFCWVSAGFWTALMGFL, VMSYLSAPLWFFFLVLSTALLAV, VALFSTTIVLLFLPKLLSVILIW, VTVSMLLEMLFSVLLAPVRMLFH, and SFLWWLAPIVVSLMLSIPVSVIS.

Belongs to the glycosyltransferase 2 family. OpgH subfamily.

Its subcellular location is the cell inner membrane. Its pathway is glycan metabolism; osmoregulated periplasmic glucan (OPG) biosynthesis. In terms of biological role, involved in the biosynthesis of osmoregulated periplasmic glucans (OPGs). This Pseudomonas syringae pv. tomato (strain ATCC BAA-871 / DC3000) protein is Glucans biosynthesis glucosyltransferase H.